A 36-amino-acid polypeptide reads, in one-letter code: Probable non-specific lipid-transfer protein (36 aa).

It belongs to the plant LTP family. Phosphorylated by Ca(2+)-dependent protein kinase.

Functionally, plant non-specific lipid-transfer proteins transfer phospholipids as well as galactolipids across membranes. May play a role in wax or cutin deposition in the cell walls of expanding epidermal cells and certain secretory tissues. In Pinus pinea (Italian stone pine), this protein is Probable non-specific lipid-transfer protein.